The sequence spans 85 residues: Large ribosomal subunit protein bL27 (85 aa).

Gly residues predominate over residues 1–10 (MAQKKGGGST). Residues 1-21 (MAQKKGGGSTRNGRDSQPKML) form a disordered region.

This sequence belongs to the bacterial ribosomal protein bL27 family.

The protein is Large ribosomal subunit protein bL27 of Leptothrix cholodnii (strain ATCC 51168 / LMG 8142 / SP-6) (Leptothrix discophora (strain SP-6)).